Consider the following 441-residue polypeptide: Membrane-bound protease PH1510 (441 aa).

Residues 1–20 (MRRILLSMIVLIFLASPILA) form the signal peptide. Substrate is bound at residue 64–67 (GGRA). S97 acts as the Nucleophile in catalysis. Position 119–124 (119–124 (ACRPIL)) interacts with substrate. K138 (proton donor/acceptor) is an active-site residue. The next 4 membrane-spanning stretches (helical) occupy residues 239–259 (VAYL…LTPG), 271–291 (IILA…ILLI), 307–327 (FGLF…LLFG), and 344–364 (ILII…MAAV).

It belongs to the peptidase S14 family. In terms of assembly, homodimer.

The protein localises to the membrane. Inhibited by divalent metal cations, including Mg(2+), Mn(2+), Ca(2+) and Zn(2+). Mildly inhibited by 0.01 % SDS and 0.1% dodecyl-beta-D-maltoside. Activity is nearly abolished by 1 % SDS. Functionally, protease that cleaves its substrates preferentially near hydrophobic or aromatic amino acid residues. Can degrade casein and the stomatin homolog PH1511 (in vitro). This chain is Membrane-bound protease PH1510, found in Pyrococcus horikoshii (strain ATCC 700860 / DSM 12428 / JCM 9974 / NBRC 100139 / OT-3).